The primary structure comprises 445 residues: Mitochondrial enolase superfamily member 1 (445 aa).

Residues 24 to 26, Tyr-34, and Lys-220 each bind substrate; that span reads GSD. Lys-222 functions as the Proton donor/acceptor in the catalytic mechanism. Mg(2+) is bound at residue Asp-250. Substrate contacts are provided by residues Asn-252, Glu-276, Glu-305, 355–357, and Glu-386; that span reads HAG. Mg(2+) is bound by residues Glu-276 and Glu-305. Residue His-355 is part of the active site.

The protein belongs to the mandelate racemase/muconate lactonizing enzyme family. ENOSF1 subfamily. Mg(2+) is required as a cofactor.

The protein resides in the mitochondrion. The catalysed reaction is L-fuconate = 2-dehydro-3-deoxy-L-fuconate + H2O. Plays a role in the catabolism of L-fucose, a sugar that is part of the carbohydrates that are attached to cellular glycoproteins. Catalyzes the dehydration of L-fuconate to 2-keto-3-deoxy-L-fuconate by the abstraction of the 2-proton to generate an enediolate intermediate that is stabilized by the magnesium ion. May down-regulate thymidylate synthase activity, possibly already at the RNA level, by promoting the degradation of TYMS mRNA via an antisense RNA-based mechanism. This chain is Mitochondrial enolase superfamily member 1 (enosf1), found in Xenopus laevis (African clawed frog).